The primary structure comprises 138 residues: Ribulose bisphosphate carboxylase small subunit (138 aa).

This sequence belongs to the RuBisCO small chain family. As to quaternary structure, heterohexadecamer of 8 large and 8 small subunits.

It is found in the plastid. Its subcellular location is the chloroplast. In terms of biological role, ruBisCO catalyzes two reactions: the carboxylation of D-ribulose 1,5-bisphosphate, the primary event in carbon dioxide fixation, as well as the oxidative fragmentation of the pentose substrate in the photorespiration process. Both reactions occur simultaneously and in competition at the same active site. Although the small subunit is not catalytic it is essential for maximal activity. The chain is Ribulose bisphosphate carboxylase small subunit from Porphyridium aerugineum (Red microalga).